A 398-amino-acid chain; its full sequence is Sphingosine 1-phosphate receptor 5 (398 aa).

Residues 1-40 lie on the Extracellular side of the membrane; that stretch reads MESGLLRPAPVSEVIVLHYNYTGKLRGARYQPGAGLRADA. A glycan (N-linked (GlcNAc...) asparagine) is linked at asparagine 20. The helical transmembrane segment at 41 to 61 threads the bilayer; that stretch reads VVCLAVCAFIVLENLAVLLVL. At 62–70 the chain is on the cytoplasmic side; it reads GRHPRFHAP. The chain crosses the membrane as a helical span at residues 71-91; sequence MFLLLGSLTLSDLLAGAAYAA. Residues 92–111 lie on the Extracellular side of the membrane; sequence NILLSGPLTLKLSPALWFAR. Residues 112–132 form a helical membrane-spanning segment; that stretch reads EGGVFVALTASVLSLLAIALE. The Cytoplasmic portion of the chain corresponds to 133–151; it reads RSLTMARRGPAPVSSRGRT. Residues 152 to 172 traverse the membrane as a helical segment; sequence LAMAAAAWGVSLLLGLLPALG. Over 173-192 the chain is Extracellular; the sequence is WNCLGRLDACSTVLPLYAKA. The helical transmembrane segment at 193-213 threads the bilayer; it reads YVLFCVLAFVGILAAICALYA. The Cytoplasmic portion of the chain corresponds to 214–252; that stretch reads RIYCQVRANARRLPARPGTAGTTSTRARRKPRSLALLRT. A helical membrane pass occupies residues 253-273; the sequence is LSVVLLAFVACWGPLFLLLLL. Residues 274–287 lie on the Extracellular side of the membrane; the sequence is DVACPARTCPVLLQ. Residues 288–308 traverse the membrane as a helical segment; sequence ADPFLGLAMANSLLNPIIYTL. Over 309 to 398 the chain is Cytoplasmic; the sequence is TNRDLRHALL…RTLVSEPAAD (90 aa). Residue cysteine 323 is the site of S-palmitoyl cysteine attachment. The segment at 329-398 is disordered; sequence GRDPSGSQQS…RTLVSEPAAD (70 aa). Residues 333–347 are compositionally biased toward low complexity; that stretch reads SGSQQSASAAEASGG. Phosphoserine is present on serine 381.

This sequence belongs to the G-protein coupled receptor 1 family. As to expression, widely expressed in the brain, most prominently in the corpus callosum, which is predominantly white matter. Detected in spleen, peripheral blood leukocytes, placenta, lung, aorta and fetal spleen. Low-level signal detected in many tissue extracts. Overexpressed in leukemic large granular lymphocytes. Isoform 1 is predominantly expressed in peripheral tissues. Isoform 2 is expressed in brain, spleen and peripheral blood leukocytes.

The protein localises to the cell membrane. In terms of biological role, receptor for the lysosphingolipid sphingosine 1-phosphate (S1P). S1P is a bioactive lysophospholipid that elicits diverse physiological effect on most types of cells and tissues. Is coupled to both the G(i/0)alpha and G(12) subclass of heteromeric G-proteins. May play a regulatory role in the transformation of radial glial cells into astrocytes and may affect proliferative activity of these cells. The polypeptide is Sphingosine 1-phosphate receptor 5 (S1PR5) (Homo sapiens (Human)).